The following is a 1026-amino-acid chain: Cadherin-like and PC-esterase domain-containing protein 1 (1026 aa).

The first 34 residues, 1-34, serve as a signal peptide directing secretion; it reads MVCRPVFPCRRRFCPRPFLVGLVVAICLFYQTLT. 6 N-linked (GlcNAc...) asparagine glycosylation sites follow: N251, N404, N413, N737, N791, and N985.

The protein belongs to the PC-esterase family.

The sequence is that of Cadherin-like and PC-esterase domain-containing protein 1 (CPED1) from Homo sapiens (Human).